We begin with the raw amino-acid sequence, 67 residues long: ATP synthase F(0) complex subunit 8 (67 aa).

A helical membrane pass occupies residues 8-24 (TWFITIISSMATLFILF). K54 carries the post-translational modification N6-acetyllysine; alternate. The residue at position 54 (K54) is an N6-succinyllysine; alternate. K57 is modified (N6-acetyllysine).

It belongs to the ATPase protein 8 family. Component of the ATP synthase complex composed at least of ATP5F1A/subunit alpha, ATP5F1B/subunit beta, ATP5MC1/subunit c (homooctomer), MT-ATP6/subunit a, MT-ATP8/subunit 8, ATP5ME/subunit e, ATP5MF/subunit f, ATP5MG/subunit g, ATP5MK/subunit k, ATP5MJ/subunit j, ATP5F1C/subunit gamma, ATP5F1D/subunit delta, ATP5F1E/subunit epsilon, ATP5PF/subunit F6, ATP5PB/subunit b, ATP5PD/subunit d, ATP5PO/subunit OSCP. ATP synthase complex consists of a soluble F(1) head domain (subunits alpha(3) and beta(3)) - the catalytic core - and a membrane F(0) domain - the membrane proton channel (subunits c, a, 8, e, f, g, k and j). These two domains are linked by a central stalk (subunits gamma, delta, and epsilon) rotating inside the F1 region and a stationary peripheral stalk (subunits F6, b, d, and OSCP). Interacts with PRICKLE3.

The protein resides in the mitochondrion membrane. Subunit 8, of the mitochondrial membrane ATP synthase complex (F(1)F(0) ATP synthase or Complex V) that produces ATP from ADP in the presence of a proton gradient across the membrane which is generated by electron transport complexes of the respiratory chain. ATP synthase complex consist of a soluble F(1) head domain - the catalytic core - and a membrane F(1) domain - the membrane proton channel. These two domains are linked by a central stalk rotating inside the F(1) region and a stationary peripheral stalk. During catalysis, ATP synthesis in the catalytic domain of F(1) is coupled via a rotary mechanism of the central stalk subunits to proton translocation. In vivo, can only synthesize ATP although its ATP hydrolase activity can be activated artificially in vitro. Part of the complex F(0) domain. The polypeptide is ATP synthase F(0) complex subunit 8 (Rattus norvegicus (Rat)).